We begin with the raw amino-acid sequence, 99 residues long: Apolipoprotein C-III (99 aa).

An N-terminal signal peptide occupies residues 1 to 20; the sequence is MQPRTLLTVALLALLASARA. M63 is modified (methionine sulfoxide). Positions 68-99 are lipid-binding; the sequence is RFLKGYWSKFTDKFTGFWDSNPEDQPTPAIES. A glycan (O-linked (GalNAc...) threonine) is linked at T94.

This sequence belongs to the apolipoprotein C3 family. Post-translationally, the most abundant glycoforms are characterized by an O-linked disaccharide galactose linked to N-acetylgalactosamine (Gal-GalNAc), further modified with up to 3 sialic acid residues. Less abundant glycoforms are characterized by more complex and fucosylated glycan moieties. O-glycosylated on Thr-94 with a core 1 or possibly core 8 glycan.

It is found in the secreted. Functionally, component of triglyceride-rich very low density lipoproteins (VLDL) and high density lipoproteins (HDL) in plasma. Plays a multifaceted role in triglyceride homeostasis. Intracellularly, promotes hepatic very low density lipoprotein 1 (VLDL1) assembly and secretion; extracellularly, attenuates hydrolysis and clearance of triglyceride-rich lipoproteins (TRLs). Impairs the lipolysis of TRLs by inhibiting lipoprotein lipase and the hepatic uptake of TRLs by remnant receptors. Formed of several curved helices connected via semiflexible hinges, so that it can wrap tightly around the curved micelle surface and easily adapt to the different diameters of its natural binding partners. The polypeptide is Apolipoprotein C-III (Apoc3) (Mus musculus (Mouse)).